We begin with the raw amino-acid sequence, 354 residues long: Glycerol-3-phosphate dehydrogenase [NAD(+)], glycosomal (354 aa).

Residues 15–20 (GSGAFG), phenylalanine 90, lysine 118, and alanine 150 each bind NAD(+). Lysine 118 provides a ligand contact to substrate. The Proton acceptor role is filled by lysine 203. NAD(+)-binding residues include arginine 267 and glutamate 293. A substrate-binding site is contributed by 267 to 268 (RN). Positions 352–354 (SKM) match the Microbody targeting signal motif.

The protein belongs to the NAD-dependent glycerol-3-phosphate dehydrogenase family.

The protein resides in the glycosome. It carries out the reaction sn-glycerol 3-phosphate + NAD(+) = dihydroxyacetone phosphate + NADH + H(+). The protein is Glycerol-3-phosphate dehydrogenase [NAD(+)], glycosomal (GPD) of Trypanosoma brucei brucei.